Consider the following 752-residue polypeptide: Phosphoribosylformylglycinamidine synthase subunit PurL (752 aa).

The active site involves histidine 58. ATP-binding residues include tyrosine 61 and lysine 103. Position 105 (glutamate 105) interacts with Mg(2+). Residues 106–109 and arginine 128 each bind substrate; that span reads SHNH. The active-site Proton acceptor is the histidine 107. Aspartate 129 contributes to the Mg(2+) binding site. Position 253 (glutamine 253) interacts with substrate. Aspartate 281 contributes to the Mg(2+) binding site. Residue 325–327 participates in substrate binding; it reads ESQ. Positions 513 and 550 each coordinate ATP. Asparagine 551 is a binding site for Mg(2+). Residue serine 553 participates in substrate binding.

It belongs to the FGAMS family. As to quaternary structure, monomer. Part of the FGAM synthase complex composed of 1 PurL, 1 PurQ and 2 PurS subunits.

The protein localises to the cytoplasm. The catalysed reaction is N(2)-formyl-N(1)-(5-phospho-beta-D-ribosyl)glycinamide + L-glutamine + ATP + H2O = 2-formamido-N(1)-(5-O-phospho-beta-D-ribosyl)acetamidine + L-glutamate + ADP + phosphate + H(+). The protein operates within purine metabolism; IMP biosynthesis via de novo pathway; 5-amino-1-(5-phospho-D-ribosyl)imidazole from N(2)-formyl-N(1)-(5-phospho-D-ribosyl)glycinamide: step 1/2. Its function is as follows. Part of the phosphoribosylformylglycinamidine synthase complex involved in the purines biosynthetic pathway. Catalyzes the ATP-dependent conversion of formylglycinamide ribonucleotide (FGAR) and glutamine to yield formylglycinamidine ribonucleotide (FGAM) and glutamate. The FGAM synthase complex is composed of three subunits. PurQ produces an ammonia molecule by converting glutamine to glutamate. PurL transfers the ammonia molecule to FGAR to form FGAM in an ATP-dependent manner. PurS interacts with PurQ and PurL and is thought to assist in the transfer of the ammonia molecule from PurQ to PurL. The protein is Phosphoribosylformylglycinamidine synthase subunit PurL of Streptomyces coelicolor (strain ATCC BAA-471 / A3(2) / M145).